The sequence spans 94 residues: Co-chaperonin GroES (94 aa).

This sequence belongs to the GroES chaperonin family. Heptamer of 7 subunits arranged in a ring. Interacts with the chaperonin GroEL.

The protein localises to the cytoplasm. Functionally, together with the chaperonin GroEL, plays an essential role in assisting protein folding. The GroEL-GroES system forms a nano-cage that allows encapsulation of the non-native substrate proteins and provides a physical environment optimized to promote and accelerate protein folding. GroES binds to the apical surface of the GroEL ring, thereby capping the opening of the GroEL channel. This Parageobacillus thermoglucosidasius (Geobacillus thermoglucosidasius) protein is Co-chaperonin GroES.